A 1080-amino-acid chain; its full sequence is Ubiquitin-activating enzyme E1 1 (1080 aa).

The span at 1-14 (MLHKRASEANDKND) shows a compositional bias: basic and acidic residues. Disordered regions lie at residues 1–20 (MLHKRASEANDKNDNTIIGS) and 29–50 (RIDFTESSSDKSSSILASGSSR). Over residues 38–49 (DKSSSILASGSS) the composition is skewed to low complexity. Residues A502, D528, R539, K552, and 600–601 (DN) each bind ATP. The active-site Glycyl thioester intermediate is C656.

It belongs to the ubiquitin-activating E1 family. Monomer. In terms of tissue distribution, expressed in leaves, flowers, roots and stems. Detected in germinating seeds, cotyledons, hypocotyls, vascular tissues, anthers, filaments, pollen, style, stigma, sepals, petals, ovary, developing ovules, funiculi and silique walls.

The catalysed reaction is ATP + ubiquitin + [E1 ubiquitin-activating enzyme]-L-cysteine = AMP + diphosphate + S-ubiquitinyl-[E1 ubiquitin-activating enzyme]-L-cysteine.. It functions in the pathway protein modification; protein ubiquitination. Functionally, activates ubiquitin by first adenylating its C-terminal glycine residue with ATP, and thereafter linking this residue to the side chain of a cysteine residue in E1, yielding a ubiquitin-E1 thioester and free AMP. The chain is Ubiquitin-activating enzyme E1 1 (UBA1) from Arabidopsis thaliana (Mouse-ear cress).